A 909-amino-acid polypeptide reads, in one-letter code: Disintegrin and metalloproteinase domain-containing protein 12 (909 aa).

The signal sequence occupies residues 1–28 (MAARPLPVSPARALLLALAGALLAPCEA). The propeptide occupies 29-207 (RGVSLWNQGR…SQTWARRHKR (179 aa)). Residues Asn-111 and Asn-149 are each glycosylated (N-linked (GlcNAc...) asparagine). Residues 177-184 (GSCGSHHN) carry the Cysteine switch motif. Positions 179 and 350 each coordinate Zn(2+). Over 208-708 (ETLKATKYVE…GPIRQADNQG (501 aa)) the chain is Extracellular. A Peptidase M12B domain is found at 214–416 (KYVELVIVAD…GMGVCLFNLP (203 aa)). 3 cysteine pairs are disulfide-bonded: Cys-325–Cys-411, Cys-367–Cys-395, and Cys-369–Cys-378. Residue Glu-351 is part of the active site. 2 residues coordinate Zn(2+): His-354 and His-360. N-linked (GlcNAc...) asparagine glycosylation is found at Asn-381 and Asn-452. The Disintegrin domain occupies 424–510 (GQKCGNRFVE…HCPANVYLHD (87 aa)). Cys-482 and Cys-502 are joined by a disulfide. Asn-651 carries an N-linked (GlcNAc...) asparagine glycan. The 33-residue stretch at 656–688 (GVHECAMQCHGRGVCNNRKNCHCEAHWAPPFCD) folds into the EGF-like domain. Intrachain disulfides connect Cys-660/Cys-670, Cys-664/Cys-676, and Cys-678/Cys-687. Residues 709 to 729 (LTIGILVTILCLLAAGFVVYL) form a helical membrane-spanning segment. Residues 730-909 (KRKTLIRLLF…PRSTHTAYIK (180 aa)) are Cytoplasmic-facing. The disordered stretch occupies residues 822–862 (LHRAPRAPSVPARPLPAKPALRQAQGTCKPNPPQKPLPADP). Positions 828 to 834 (APSVPAR) match the SH3-binding; class II motif. The SH3-binding; class I motif lies at 834-841 (RPLPAKPA). Positions 851 to 860 (PNPPQKPLPA) are enriched in pro residues. The SH3-binding; class I motif lies at 885–891 (RLAPLRP). Residue Tyr-907 is modified to Phosphotyrosine; by SRC.

In terms of assembly, interacts with alpha-actinin-2 and with syndecans. Interacts with SH3PXD2A. Interacts with FST3. Interacts with RACK1; the interaction is required for PKC-dependent translocation of ADAM12 to the cell membrane. Zn(2+) serves as cofactor. Post-translationally, the precursor is cleaved by a furin endopeptidase. As to expression, isoform 1 is expressed in placenta and skeletal, cardiac, and smooth muscle. Isoform 2 seems to be expressed only in placenta or in embryo and fetus. Both forms were expressed in some tumor cells lines. Not detected in brain, lung, liver, kidney or pancreas.

It localises to the cell membrane. The protein resides in the secreted. Functionally, involved in skeletal muscle regeneration, specifically at the onset of cell fusion. Also involved in macrophage-derived giant cells (MGC) and osteoclast formation from mononuclear precursors. The sequence is that of Disintegrin and metalloproteinase domain-containing protein 12 (ADAM12) from Homo sapiens (Human).